The primary structure comprises 185 residues: Transcriptional repressor NrdR (185 aa).

Residues methionine 1–alanine 24 form a disordered region. A zinc finger lies at cysteine 3–cysteine 34. Basic and acidic residues predominate over residues glutamine 12–alanine 24. The ATP-cone domain occupies leucine 49–aspartate 139. Residues glutamate 149–alanine 185 form a disordered region. Residues arginine 176–alanine 185 show a composition bias toward basic residues.

The protein belongs to the NrdR family. Zn(2+) serves as cofactor.

Negatively regulates transcription of bacterial ribonucleotide reductase nrd genes and operons by binding to NrdR-boxes. In Methylorubrum extorquens (strain PA1) (Methylobacterium extorquens), this protein is Transcriptional repressor NrdR.